The chain runs to 154 residues: Deoxyuridine 5'-triphosphate nucleotidohydrolase (154 aa).

Residues 64 to 66 (RSG), Asn77, 81 to 83 (TID), and Lys91 each bind substrate.

The protein belongs to the dUTPase family. Homotrimer. Requires Mg(2+) as cofactor.

It catalyses the reaction dUTP + H2O = dUMP + diphosphate + H(+). The protein operates within pyrimidine metabolism; dUMP biosynthesis; dUMP from dCTP (dUTP route): step 2/2. In terms of biological role, this enzyme is involved in nucleotide metabolism: it produces dUMP, the immediate precursor of thymidine nucleotides and it decreases the intracellular concentration of dUTP so that uracil cannot be incorporated into DNA. This chain is Deoxyuridine 5'-triphosphate nucleotidohydrolase, found in Mycobacterium marinum (strain ATCC BAA-535 / M).